The chain runs to 60 residues: Large ribosomal subunit protein bL32 (60 aa).

Disordered stretches follow at residues 1–22 (MAVQ…HNAL) and 34–60 (GETH…KSEA). Basic residues predominate over residues 9–19 (SPSKRGMHRSH).

The protein belongs to the bacterial ribosomal protein bL32 family.

In Variovorax paradoxus (strain S110), this protein is Large ribosomal subunit protein bL32.